The following is a 151-amino-acid chain: 3-dehydroquinate dehydratase 1 (151 aa).

Residue tyrosine 23 is the Proton acceptor of the active site. Asparagine 75, histidine 81, and aspartate 88 together coordinate substrate. Residue histidine 101 is the Proton donor of the active site. Residues 102 to 103 (LS) and arginine 112 each bind substrate.

It belongs to the type-II 3-dehydroquinase family. In terms of assembly, homododecamer.

The catalysed reaction is 3-dehydroquinate = 3-dehydroshikimate + H2O. The protein operates within metabolic intermediate biosynthesis; chorismate biosynthesis; chorismate from D-erythrose 4-phosphate and phosphoenolpyruvate: step 3/7. Catalyzes a trans-dehydration via an enolate intermediate. The sequence is that of 3-dehydroquinate dehydratase 1 (aroQ1) from Pseudomonas putida (strain ATCC 47054 / DSM 6125 / CFBP 8728 / NCIMB 11950 / KT2440).